Reading from the N-terminus, the 225-residue chain is Elongation factor 1-beta (225 aa).

The region spanning 2–84 (GFGDLKSPAG…ALGKYGPADV (83 aa)) is the GST C-terminal domain. Lys-7 is modified (N6-acetyllysine). Phosphoserine occurs at positions 8 and 42. A disordered region spans residues 78-115 (KYGPADVEDTTGSGATDSKDDDDIDLFGSDDEEESEEA). Residues Thr-88 and Thr-93 each carry the phosphothreonine modification. Phosphoserine is present on residues Ser-95 and Ser-106. Over residues 96–113 (KDDDDIDLFGSDDEEESE) the composition is skewed to acidic residues. Lys-147 is covalently cross-linked (Glycyl lysine isopeptide (Lys-Gly) (interchain with G-Cter in SUMO2)). Ser-174 is subject to Phosphoserine.

This sequence belongs to the EF-1-beta/EF-1-delta family. EF-1 is composed of 4 subunits: alpha, beta (alpha subunit of the eEF1B subcomplex), delta (beta subunit of the eEF1B subcomplex), and gamma (gamma subunit of the eEF1B subcomplex). Interacts with elongation factor EEF1A1. Post-translationally, phosphorylation affects the GDP/GTP exchange rate.

Catalytic subunit of the guanine nucleotide exchange factor (GEF) (eEF1B subcomplex) of the eukaryotic elongation factor 1 complex (eEF1). Stimulates the exchange of GDP for GTP on elongation factor 1A (eEF1A), probably by displacing GDP from the nucleotide binding pocket in eEF1A. This chain is Elongation factor 1-beta (EEF1B2), found in Homo sapiens (Human).